The sequence spans 415 residues: Branched-chain-amino-acid aminotransferase, cytosolic (415 aa).

An N6-(pyridoxal phosphate)lysine modification is found at Lys244.

This sequence belongs to the class-IV pyridoxal-phosphate-dependent aminotransferase family. Pyridoxal 5'-phosphate serves as cofactor.

The protein localises to the cytoplasm. The catalysed reaction is L-leucine + 2-oxoglutarate = 4-methyl-2-oxopentanoate + L-glutamate. It catalyses the reaction L-isoleucine + 2-oxoglutarate = (S)-3-methyl-2-oxopentanoate + L-glutamate. It carries out the reaction L-valine + 2-oxoglutarate = 3-methyl-2-oxobutanoate + L-glutamate. In terms of biological role, catalyzes the first reaction in the catabolism of the essential branched chain amino acids leucine, isoleucine, and valine. The protein is Branched-chain-amino-acid aminotransferase, cytosolic (bcat-1) of Caenorhabditis elegans.